The following is a 500-amino-acid chain: Kynurenine 3-monooxygenase acdD (500 aa).

FAD contacts are provided by residues Val17 and 36 to 38 (ELR). An N-linked (GlcNAc...) asparagine glycan is attached at Asn50. Position 58 (Ala58) interacts with FAD. L-kynurenine-binding residues include Arg89 and Tyr106. FAD-binding residues include Arg118 and Leu143. Asn163 carries N-linked (GlcNAc...) asparagine glycosylation. FAD is bound by residues Asp321 and 332 to 335 (QGLN). Residues Asn392 and Tyr428 each contribute to the L-kynurenine site. A helical transmembrane segment spans residues 451-471 (LLLYGSISAIISSAAIVGVLA).

This sequence belongs to the aromatic-ring hydroxylase family. KMO subfamily. FAD serves as cofactor.

It localises to the mitochondrion outer membrane. The enzyme catalyses L-kynurenine + NADPH + O2 + H(+) = 3-hydroxy-L-kynurenine + NADP(+) + H2O. It functions in the pathway secondary metabolite biosynthesis. Its pathway is cofactor biosynthesis; NAD(+) biosynthesis; quinolinate from L-kynurenine: step 1/3. Its function is as follows. Indoleamine 2,3-dioxygenase; part of the gene cluster that mediates the biosynthesis of aspcandine, a pyrrolobenzazepine alkaloid. Initially, the indoleamine 2,3-dioxygenase acdA accepts L-tryptophan and performs the oxidative opening of the indole ring to yield N'-formyl-L-kynurenine, which undergoes the spontaneous deformylation reaction to provide L-kynurenine. The kynurenine 3-monooxygenase acdD then hydroxylates L-kynurenine to afford 3-hydroxy-L-kynurenine. 3-hydroxy-L-kynurenine is activated by the A domain of the NRPS-PKS acdB and subsequently loaded onto the enzyme. The KS domain conducts the decarboxylative condensation of the 3-hydroxy-L-kynurenyl and malonyl moieties, and subsequent nucleophilic attacks by the two amino groups would occur nonenzymatically at two distinct positions, achieving the chain release and the construction of the tricyclic system. Finally, the dehydration reaction completes the biosynthesis to yield aspcandine. In Aspergillus candidus, this protein is Kynurenine 3-monooxygenase acdD.